A 301-amino-acid polypeptide reads, in one-letter code: Glycine--tRNA ligase alpha subunit (301 aa).

The protein belongs to the class-II aminoacyl-tRNA synthetase family. Tetramer of two alpha and two beta subunits.

It is found in the cytoplasm. It carries out the reaction tRNA(Gly) + glycine + ATP = glycyl-tRNA(Gly) + AMP + diphosphate. The polypeptide is Glycine--tRNA ligase alpha subunit (Shewanella amazonensis (strain ATCC BAA-1098 / SB2B)).